Reading from the N-terminus, the 326-residue chain is Tetraacyldisaccharide 4'-kinase (326 aa).

Residue 55 to 62 (TAGGNGKT) coordinates ATP.

The protein belongs to the LpxK family.

It carries out the reaction a lipid A disaccharide + ATP = a lipid IVA + ADP + H(+). The protein operates within glycolipid biosynthesis; lipid IV(A) biosynthesis; lipid IV(A) from (3R)-3-hydroxytetradecanoyl-[acyl-carrier-protein] and UDP-N-acetyl-alpha-D-glucosamine: step 6/6. Transfers the gamma-phosphate of ATP to the 4'-position of a tetraacyldisaccharide 1-phosphate intermediate (termed DS-1-P) to form tetraacyldisaccharide 1,4'-bis-phosphate (lipid IVA). The chain is Tetraacyldisaccharide 4'-kinase from Serratia proteamaculans (strain 568).